A 595-amino-acid polypeptide reads, in one-letter code: MQQQSEISKQVFISPDLSDNYNNNNSNINTNNNNSINDYENQNNGLVVPQSNQNQQYQDDQNDSFDDDSMDEGEEKSNLIIDESQQNSLNNNNNNSENNNINNSENNNINNSENNIHNNNNNNNNNNNNNNNNNNNNNNNNNNNNNNNNNNNNNTINNNNNNNNINNNINNNNNNYNNNNINNNNNINNNNNNNNENNNNNENNNNNNENNNKFIGSPMGEPQINNNNNNNNNNNNNNNNNNNNNNNNKNNNNNNNNNNNNNNNRKFDDQQIIKDLENRLKEAKKTNQLLDEKCNQLKKNITEKNHLLSRYINTLNSSVLQKKTLNRNRSRSRSRSNSRSHSRSRSRSRSLSSISRSRSRSRLIYSRSPSQSPQKNNNNNNNTNKSNSNNNNNHFNNNNNNNNNNNNNNNNNNNNNNNNNNKRKSEDDNQDDGKKKHRKNAIWTQEEDEKMAQLYNKYGKSWKAIHSHFDDKTREQVQSHGQYLIRIGKLEDIHRDGRKERRKGKQALQERQQQLEQQNQQNNNNNNYNNNINNNSNYNNNNNNINNSINNNNSNQNNYSDNNSNNNNNYGDNNITHNNYNDNSLNSSNYVNNDN.

4 disordered regions span residues 1–47 (MQQQ…NGLV), 55–74 (QQYQ…DEGE), 82–266 (DESQ…NNRK), and 319–445 (VLQK…IWTQ). The span at 19–47 (DNYNNNNSNINTNNNNSINDYENQNNGLV) shows a compositional bias: low complexity. Residues 60–74 (DQNDSFDDDSMDEGE) are compositionally biased toward acidic residues. Composition is skewed to low complexity over residues 90–212 (NNNN…ENNN) and 225–264 (NNNN…NNNN). The segment covering 324–348 (TLNRNRSRSRSRSNSRSHSRSRSRS) has biased composition (basic residues). 2 stretches are compositionally biased toward low complexity: residues 349–368 (RSLS…YSRS) and 376–420 (NNNN…NNNN). The span at 423 to 434 (RKSEDDNQDDGK) shows a compositional bias: basic and acidic residues. One can recognise an HTH myb-type domain in the interval 435–489 (KKHRKNAIWTQEEDEKMAQLYNKYGKSWKAIHSHFDDKTREQVQSHGQYLIRIGK). The segment at residues 462 to 485 (WKAIHSHFDDKTREQVQSHGQYLI) is a DNA-binding region (H-T-H motif). The tract at residues 494–595 (HRDGRKERRK…NSSNYVNNDN (102 aa)) is disordered. The segment covering 517–595 (QQNQQNNNNN…NSSNYVNNDN (79 aa)) has biased composition (low complexity).

Its subcellular location is the nucleus. This Dictyostelium discoideum (Social amoeba) protein is Myb-like protein D (mybD).